The following is a 75-amino-acid chain: Alpha-elapitoxin-Bc2b (75 aa).

The signal sequence occupies residues 1 to 2 (YT). Disulfide bonds link Cys-5–Cys-24, Cys-17–Cys-45, Cys-30–Cys-34, Cys-49–Cys-60, and Cys-61–Cys-66.

As to quaternary structure, monomer in solution, homodimer in crystal state. In terms of tissue distribution, expressed by the venom gland.

Its subcellular location is the secreted. In terms of biological role, binds to muscular and neuronal nicotinic acetylcholine receptor (nAChR) and inhibits acetylcholine from binding to the receptor, thereby impairing neuromuscular and neuronal transmission. Blocks muscle type nAChR. Also binds with high affinity to alpha-7/CHRNA7 nAChRs. In addition, shows a weak inhibition of neuronal alpha-3-beta-2/CHRNA3-CHRNB2 nAChR. Selectively binds to alpha-1-delta subunit interface of the mouse muscle nicotinic acetylcholine receptor, with a 10-fold higher affinity for the adult than for the fetal receptors. In vivo, when intraperitoneally injected into mice, causes flaccid paralysis and respiratory distress, followed by death within 2-4 hours. This is Alpha-elapitoxin-Bc2b from Bungarus candidus (Malayan krait).